Consider the following 104-residue polypeptide: Large ribosomal subunit protein bL21 (104 aa).

It belongs to the bacterial ribosomal protein bL21 family. Part of the 50S ribosomal subunit. Contacts protein L20.

Functionally, this protein binds to 23S rRNA in the presence of protein L20. The chain is Large ribosomal subunit protein bL21 from Opitutus terrae (strain DSM 11246 / JCM 15787 / PB90-1).